Consider the following 802-residue polypeptide: Leucine--tRNA ligase (802 aa).

A 'HIGH' region motif is present at residues 39 to 50 (PYPSGAGLHVGH). The 'KMSKS' region signature appears at 574–578 (KMSKS). Position 577 (Lys577) interacts with ATP.

It belongs to the class-I aminoacyl-tRNA synthetase family.

The protein resides in the cytoplasm. It carries out the reaction tRNA(Leu) + L-leucine + ATP = L-leucyl-tRNA(Leu) + AMP + diphosphate. The chain is Leucine--tRNA ligase from Macrococcus caseolyticus (strain JCSC5402) (Macrococcoides caseolyticum).